The primary structure comprises 130 residues: WAP four-disulfide core domain protein 3 (130 aa).

The N-terminal stretch at 1–16 (MKALLALGFLASWVAA) is a signal peptide. WAP domains are found at residues 17–61 (GEHA…RGDI) and 62–106 (EGGR…IPGL). Intrachain disulfides connect Cys-25/Cys-49, Cys-32/Cys-53, Cys-36/Cys-48, Cys-42/Cys-57, Cys-69/Cys-94, Cys-77/Cys-98, Cys-81/Cys-93, and Cys-87/Cys-102. Asn-116 carries N-linked (GlcNAc...) asparagine glycosylation.

The protein localises to the secreted. The sequence is that of WAP four-disulfide core domain protein 3 (Wfdc3) from Mus musculus (Mouse).